Consider the following 686-residue polypeptide: tRNA wybutosine-synthesizing protein 4 (686 aa).

The segment covering 1-10 (MGPRSRERRA) has biased composition (basic and acidic residues). Positions 1 to 21 (MGPRSRERRAGAVQNTNDSSA) are disordered. Residues arginine 59, glycine 89, aspartate 114, 161 to 162 (DL), and glutamate 188 contribute to the S-adenosyl-L-methionine site.

The protein belongs to the methyltransferase superfamily. LCMT family. Interacts with RNF144B/IBRDC2.

The catalysed reaction is 7-[(3S)-3-amino-3-carboxypropyl]wyosine(37) in tRNA(Phe) + S-adenosyl-L-methionine = 7-[(3S)-(3-amino-3-methoxycarbonyl)propyl]wyosine(37) in tRNA(Phe) + S-adenosyl-L-homocysteine. It carries out the reaction 7-[(3S)-(3-amino-3-methoxycarbonyl)propyl]wyosine(37) in tRNA(Phe) + S-adenosyl-L-methionine + CO2 = wybutosine(37) in tRNA(Phe) + S-adenosyl-L-homocysteine + 2 H(+). It functions in the pathway tRNA modification; wybutosine-tRNA(Phe) biosynthesis. Functionally, probable S-adenosyl-L-methionine-dependent methyltransferase that acts as a component of the wybutosine biosynthesis pathway. Wybutosine is a hyper modified guanosine with a tricyclic base found at the 3'-position adjacent to the anticodon of eukaryotic phenylalanine tRNA. May methylate the carboxyl group of leucine residues to form alpha-leucine ester residues. The polypeptide is tRNA wybutosine-synthesizing protein 4 (LCMT2) (Homo sapiens (Human)).